A 298-amino-acid polypeptide reads, in one-letter code: U1 small nuclear ribonucleoprotein A (298 aa).

RRM domains are found at residues 2-113 and 227-298; these read SALY…KART and KVLL…GFAK.

It belongs to the RRM U1 A/B'' family. As to quaternary structure, component of the spliceosome where it is associated with snRNP U1.

The protein localises to the nucleus. Its function is as follows. Involved in nuclear mRNA splicing. The principal role of the U1A is to help fold or maintain U1 RNA in an active configuration. It is the first snRNP to interact with pre-mRNA. This interaction is required for the subsequent binding of U2 snRNP and the U4/U6/U5 tri-snRNP. In Saccharomyces cerevisiae (strain ATCC 204508 / S288c) (Baker's yeast), this protein is U1 small nuclear ribonucleoprotein A (MUD1).